The following is a 639-amino-acid chain: Polypeptide N-acetylgalactosaminyltransferase 15 (639 aa).

Residues 1–11 lie on the Cytoplasmic side of the membrane; it reads MLLRKRYRHRP. Residues 12 to 34 form a helical; Signal-anchor for type II membrane protein membrane-spanning segment; the sequence is CRLQFLLLLLMLGCVLMMVAMLH. The Lumenal segment spans residues 35-639; sequence PPHHTLHQTV…FDQINAVDER (605 aa). The interval 106–155 is disordered; the sequence is RNQSQGRRGGSYRLIKQPRRQDKEAPKRDWGADEDGEVSEEEELTPFSLD. N-linked (GlcNAc...) asparagine glycosylation is present at Asn-107. The span at 124 to 136 shows a compositional bias: basic and acidic residues; it reads RRQDKEAPKRDWG. The segment covering 137–149 has biased composition (acidic residues); that stretch reads ADEDGEVSEEEEL. 5 disulfides stabilise this stretch: Cys-181-Cys-412, Cys-403-Cys-482, Cys-517-Cys-536, Cys-562-Cys-575, and Cys-603-Cys-620. Residues 190 to 299 form a catalytic subdomain A region; it reads LPTASVILCF…PGWLEPLLSR (110 aa). Residues Asp-231 and Arg-260 each contribute to the substrate site. Mn(2+) is bound by residues Asp-283, His-285, and His-417. The catalytic subdomain B stretch occupies residues 358–420; that stretch reads PIRSPVVPGE…PCSRVGHIYQ (63 aa). Residues 504 to 631 enclose the Ricin B-type lectin domain; the sequence is SFSGKLHNTG…GKARQQWRFD (128 aa). Asn-574 carries N-linked (GlcNAc...) asparagine glycosylation.

The protein belongs to the glycosyltransferase 2 family. GalNAc-T subfamily. The cofactor is Mn(2+). In terms of tissue distribution, widely expressed. Highly expressed in small intestine, placenta, spleen, cerebral cortex and ovary. Expressed at intermediate level in uterus, mammary gland, stomach, cerebellum and whole brain. Weakly expressed in fetal brain, bone marrow, thyroid gland, thymus, heart, skeletal muscle, lung, liver, colon, pancreas, kidney and testis. Not expressed in leukocyte. Expressed in both normal and osteoarthritic cartilage. Expressed at low level in chondrocytes in all zones of both normal and osteoarthritic cartilage.

It is found in the golgi apparatus membrane. The enzyme catalyses L-seryl-[protein] + UDP-N-acetyl-alpha-D-galactosamine = a 3-O-[N-acetyl-alpha-D-galactosaminyl]-L-seryl-[protein] + UDP + H(+). It catalyses the reaction L-threonyl-[protein] + UDP-N-acetyl-alpha-D-galactosamine = a 3-O-[N-acetyl-alpha-D-galactosaminyl]-L-threonyl-[protein] + UDP + H(+). It participates in protein modification; protein glycosylation. Its function is as follows. Catalyzes the initial reaction in O-linked oligosaccharide biosynthesis, the transfer of an N-acetyl-D-galactosamine residue to a serine or threonine residue on the protein receptor. Although it displays a much weaker activity toward all substrates tested compared to GALNT2, it is able to transfer up to seven GalNAc residues to the Muc5AC peptide, suggesting that it can fill vicinal Thr/Ser residues in cooperation with other GALNT proteins. Prefers Muc1a as substrate. In Homo sapiens (Human), this protein is Polypeptide N-acetylgalactosaminyltransferase 15 (GALNT15).